Consider the following 262-residue polypeptide: Tetratricopeptide repeat protein 33 (262 aa).

The tract at residues 17-63 is disordered; the sequence is ATSQQFEAEAADEKDAAENEDGNWLQASKRRKETLQEGCKQRSQQLK. TPR repeat units lie at residues 59 to 92, 93 to 126, and 127 to 160; these read SQQLKDEGAQLAENKRYKEAIQKWDEALQLTPGD, ATLYEMKSQVLLSLHEMFPAVHAAEMAVKRNPHS, and WEAWQTLGRAQLGLGEIVLAIRSFQIALHIYPMN. The residue at position 197 (Ser197) is a Phosphoserine.

The polypeptide is Tetratricopeptide repeat protein 33 (Ttc33) (Mus musculus (Mouse)).